The following is a 351-amino-acid chain: Histidine protein kinase SaeS (351 aa).

2 helical membrane passes run 9-29 (IIIGVVSSILLTSTILAIAYI) and 40-60 (TLTLTTIITSCLTLLICSIFI). An HAMP domain is found at 61-114 (NPLIQKIKQFNIKTKQFANGNYASNDKTFNSPKEIYELNQSFNKMASEITQQMN). The Histidine kinase domain maps to 129-348 (NLAHDLKTPL…TMTVTLHKLD (220 aa)). Position 132 is a phosphohistidine; by autocatalysis (H132).

Autophosphorylated.

Its subcellular location is the cell membrane. The enzyme catalyses ATP + protein L-histidine = ADP + protein N-phospho-L-histidine.. Its function is as follows. Member of the two-component regulatory system SaeR/SaeS involved in the regulation of staphylococcal virulence factors in a strain-dependent fashion. Probably functions as a membrane-associated protein kinase that upon sensing the appropriate signal, autophosphorylates and in turn activates the cytosolic response regulator SaeR. The protein is Histidine protein kinase SaeS (saeS) of Staphylococcus aureus (strain bovine RF122 / ET3-1).